A 118-amino-acid polypeptide reads, in one-letter code: T cell receptor gamma variable 4 (118 aa).

The first 17 residues, 1–17 (MQWALAVLLAFLSPASQ), serve as a signal peptide directing secretion. The Ig-like domain maps to 18–118 (KSSNLEGRTK…GVYYCATWDG (101 aa)). Cys41 and Cys113 are oxidised to a cystine. Asn106 is a glycosylation site (N-linked (GlcNAc...) asparagine).

As to quaternary structure, gamma-delta TR is a heterodimer composed of a gamma and delta chain; disulfide-linked. The gamma-delta TR is associated with the transmembrane signaling CD3 coreceptor proteins following the stoichiometry: a single gamma-delta TR heterodimer associates with one CD3D-CD3E heterodimer, one CD3G-CD3E heterodimer and one CD247 homodimer forming a stable octameric structure. Upon activation, gamma-delta TR complex associates with FCER1G to initiate intracellular signaling.

It localises to the cell membrane. In terms of biological role, v region of the variable domain of T cell receptor (TR) gamma chain that participates in the antigen recognition. Gamma-delta TRs recognize a variety of self and foreign non-peptide antigens frequently expressed at the epithelial boundaries between the host and external environment, including endogenous lipids presented by MH-like protein CD1D and phosphoantigens presented by butyrophilin-like molecule BTN3A1. Upon antigen recognition induces rapid, innate-like immune responses involved in pathogen clearance and tissue repair. Binding of gamma-delta TR complex to antigen triggers phosphorylation of immunoreceptor tyrosine-based activation motifs (ITAMs) in the CD3 chains by the LCK and FYN kinases, allowing the recruitment, phosphorylation, and activation of ZAP70 that facilitates phosphorylation of the scaffolding proteins LCP2 and LAT. This lead to the formation of a supramolecular signalosome that recruits the phospholipase PLCG1, resulting in calcium mobilization and ERK activation, ultimately leading to T cell expansion and differentiation into effector cells. Gamma-delta TRs are produced through somatic rearrangement of a limited repertoire of variable (V), diversity (D), and joining (J) genes. The potential diversity of gamma-delta TRs is conferred by the unique ability to rearrange (D) genes in tandem and to utilize all three reading frames. The combinatorial diversity is considerably increased by the sequence exonuclease trimming and random nucleotide (N) region additions which occur during the V-(D)-J rearrangements. This Homo sapiens (Human) protein is T cell receptor gamma variable 4.